The following is a 668-amino-acid chain: Major S-layer protein (668 aa).

Positions M1–A24 are cleaved as a signal peptide. N-linked (GlcNAc...) asparagine glycans are attached at residues N36, N65, N111, N265, N583, N596, N602, N608, N617, and N635. The tract at residues E584 to V650 is disordered. Over residues N596–S611 the composition is skewed to polar residues. Residues E631–E641 show a composition bias toward acidic residues. A helical membrane pass occupies residues G644 to V664.

The protein belongs to the Methanosarcinales S-layer protein family. Post-translationally, glycosylated.

Its subcellular location is the secreted. The protein localises to the cell wall. The protein resides in the S-layer. It localises to the cell membrane. In terms of biological role, S-layer protein. The S-layer is a paracrystalline mono-layered assembly of proteins which coat the surface of the cell. The sequence is that of Major S-layer protein from Methanosarcina barkeri (strain Fusaro / DSM 804).